Reading from the N-terminus, the 34-residue chain is Tau-theraphotoxin-Pc1c (34 aa).

Cystine bridges form between C2–C16, C9–C21, and C15–C28. F34 is modified (phenylalanine amide).

The protein belongs to the neurotoxin 10 (Hwtx-1) family. 62 (Vatx) subfamily. Expressed by the venom gland.

It localises to the secreted. In terms of biological role, selectively activates mammalian TRPV1, or capsaicin receptor, a non-selective cation channel expressed by sensory neurons of the pain pathway. Is more potent than VaTx1 and VaTx2. Interacts with distinct regions of the channel than capsaicin, since it only acts on the extracellular face of the channel, and capsaicin binds to the cytosolic side. Also activates avian TRPV1, which is insensitive to capsaicin. In mice, elicits pain-related behaviors, such as licking and flinching of the affected limb. The paw of toxin-injected mice shows substantial edema. The chain is Tau-theraphotoxin-Pc1c from Psalmopoeus cambridgei (Trinidad chevron tarantula).